Consider the following 84-residue polypeptide: Large ribosomal subunit protein uL23 (84 aa).

This sequence belongs to the universal ribosomal protein uL23 family. In terms of assembly, part of the 50S ribosomal subunit. Contacts protein L29.

Binds to 23S rRNA. One of the proteins that surrounds the polypeptide exit tunnel on the outside of the ribosome. This chain is Large ribosomal subunit protein uL23, found in Haloquadratum walsbyi (strain DSM 16790 / HBSQ001).